Reading from the N-terminus, the 149-residue chain is Large ribosomal subunit protein eL19 (149 aa).

The interval 45 to 94 (VADGTIDAEDTQGNSRGRARERDAKESYGHKKGAGSRKGKAGARQNEKRE) is disordered. A compositionally biased stretch (basic and acidic residues) spans 62-73 (RARERDAKESYG). Residues 74–85 (HKKGAGSRKGKA) show a composition bias toward basic residues.

Belongs to the eukaryotic ribosomal protein eL19 family. As to quaternary structure, part of the 50S ribosomal subunit.

Binds to the 23S rRNA. The polypeptide is Large ribosomal subunit protein eL19 (Halobacterium salinarum (strain ATCC 700922 / JCM 11081 / NRC-1) (Halobacterium halobium)).